Reading from the N-terminus, the 314-residue chain is Ribosome maturation factor RimP (314 aa).

Disordered regions lie at residues 1-20 (MDLD…QPLS), 152-176 (PIEA…AKPE), and 206-314 (AAKA…PAPK). The span at 10-19 (PSAQVGQQPL) shows a compositional bias: polar residues. The span at 215 to 227 (DGNNEEQDEEQEE) shows a compositional bias: acidic residues. Residues 247–256 (PEHNPAQNPI) are compositionally biased toward polar residues. Basic and acidic residues-rich tracts occupy residues 270–279 (TEFKKSKTGE) and 303–314 (SGHDMPRKPAPK).

This sequence belongs to the RimP family.

It is found in the cytoplasm. Functionally, required for maturation of 30S ribosomal subunits. The polypeptide is Ribosome maturation factor RimP (Beijerinckia indica subsp. indica (strain ATCC 9039 / DSM 1715 / NCIMB 8712)).